A 425-amino-acid polypeptide reads, in one-letter code: Multifunctional CCA protein (425 aa).

The ATP site is built by glycine 8 and arginine 11. The CTP site is built by glycine 8 and arginine 11. Mg(2+) is bound by residues glutamate 21 and aspartate 23. 3 residues coordinate ATP: arginine 91, arginine 137, and arginine 140. Residues arginine 91, arginine 137, and arginine 140 each contribute to the CTP site. The region spanning 228–329 (TGVHTLMVLD…VDLLDRLGAL (102 aa)) is the HD domain.

Belongs to the tRNA nucleotidyltransferase/poly(A) polymerase family. Bacterial CCA-adding enzyme type 1 subfamily. Monomer. Can also form homodimers and oligomers. The cofactor is Mg(2+). It depends on Ni(2+) as a cofactor.

It carries out the reaction a tRNA precursor + 2 CTP + ATP = a tRNA with a 3' CCA end + 3 diphosphate. The enzyme catalyses a tRNA with a 3' CCA end + 2 CTP + ATP = a tRNA with a 3' CCACCA end + 3 diphosphate. Its function is as follows. Catalyzes the addition and repair of the essential 3'-terminal CCA sequence in tRNAs without using a nucleic acid template. Adds these three nucleotides in the order of C, C, and A to the tRNA nucleotide-73, using CTP and ATP as substrates and producing inorganic pyrophosphate. tRNA 3'-terminal CCA addition is required both for tRNA processing and repair. Also involved in tRNA surveillance by mediating tandem CCA addition to generate a CCACCA at the 3' terminus of unstable tRNAs. While stable tRNAs receive only 3'-terminal CCA, unstable tRNAs are marked with CCACCA and rapidly degraded. This chain is Multifunctional CCA protein, found in Methylococcus capsulatus (strain ATCC 33009 / NCIMB 11132 / Bath).